The primary structure comprises 798 residues: Integrin beta-1 (798 aa).

The N-terminal stretch at 1–20 is a signal peptide; that stretch reads MNLQLIFWIGLISSVCCVFG. Residues 21–728 are Extracellular-facing; the sequence is QADENRCLKA…ETPECPTGPD (708 aa). Residues 26 to 76 enclose the PSI domain; it reads RCLKANAKSCGECIQAGPNCGWCTNSTFLQEGMPTSARCDDLEALKKKGCH. Disulfide bonds link Cys-27–Cys-45, Cys-35–Cys-464, Cys-38–Cys-64, Cys-48–Cys-75, Cys-207–Cys-213, Cys-261–Cys-301, Cys-401–Cys-415, Cys-435–Cys-462, Cys-466–Cys-486, Cys-477–Cys-489, Cys-491–Cys-500, Cys-502–Cys-533, Cys-516–Cys-531, Cys-525–Cys-536, Cys-538–Cys-553, Cys-555–Cys-576, Cys-560–Cys-574, Cys-568–Cys-579, Cys-581–Cys-590, Cys-592–Cys-615, Cys-599–Cys-613, Cys-607–Cys-618, Cys-620–Cys-630, Cys-633–Cys-636, Cys-640–Cys-691, Cys-646–Cys-665, Cys-649–Cys-661, and Cys-699–Cys-723. Asn-50 carries an N-linked (GlcNAc...) asparagine glycan. Residues 75–91 are compositionally biased toward basic and acidic residues; sequence CHPNDIENPRGSKDIKK. The segment at 75 to 105 is disordered; sequence CHPNDIENPRGSKDIKKNKNVTNRSKGTAEK. 2 N-linked (GlcNAc...) asparagine glycosylation sites follow: Asn-94 and Asn-97. Residues 140–378 form the VWFA domain; it reads DYPIDLYYLM…QLIIDAYNSL (239 aa). Positions 152 and 154 each coordinate Mg(2+). The Ca(2+) site is built by Ser-154, Asp-157, Asp-158, and Glu-189. The tract at residues 207-213 is CX3CL1-binding; sequence CTNEQNC. A glycan (N-linked (GlcNAc...) asparagine) is linked at Asn-212. Residues Asn-244, Asp-246, Pro-248, and Glu-249 each contribute to the Ca(2+) site. Residue Glu-249 coordinates Mg(2+). Asn-269 carries N-linked (GlcNAc...) asparagine glycosylation. Positions 295 to 314 are CX3CL1-binding; the sequence is LPNDGQCHLENDVYTMSHYY. Ala-362 lines the Ca(2+) pocket. N-linked (GlcNAc...) asparagine glycosylation is found at Asn-363, Asn-406, and Asn-417. The tract at residues 383-465 is interaction with TMEM182; the sequence is ILENSKLPEG…IILQFICECE (83 aa). I-EGF domains are found at residues 466–501, 502–554, 555–591, and 592–631; these read CQGE…RHCE, CSTD…KFCE, CDNF…SACD, and CSLD…PTCE. Asn-481 carries N-linked (GlcNAc...) asparagine glycosylation. N-linked (GlcNAc...) asparagine glycosylation is present at Asn-520. Residue Asn-584 is glycosylated (N-linked (GlcNAc...) asparagine). An N-linked (GlcNAc...) asparagine glycan is attached at Asn-669. The helical transmembrane segment at 729–749 threads the bilayer; that stretch reads IIPIVAGVVAGIVLIGLALLL. Residues 750–798 lie on the Cytoplasmic side of the membrane; that stretch reads IWKLLMIIHDRREFAKFEKEKMNAKWDTGENPIYKSAVTTVVNPKYEGK. Residues 762–767 form a signal for sorting from recycling endosomes; interaction with ACAP1 region; that stretch reads EFAKFE. Thr-777 bears the Phosphothreonine mark. At Tyr-783 the chain carries Phosphotyrosine. Phosphoserine is present on Ser-785. The tract at residues 785-792 is interaction with ITGB1BP1; that stretch reads SAVTTVVN. At Thr-789 the chain carries Phosphothreonine. Position 794 is an N6-acetyllysine; alternate (Lys-794). Residue Lys-794 forms a Glycyl lysine isopeptide (Lys-Gly) (interchain with G-Cter in SUMO1); alternate linkage.

Belongs to the integrin beta chain family. As to quaternary structure, interacts with seprase FAP (seprase); the interaction occurs at the cell surface of invadopodia membrane in a collagen-dependent manner. Heterodimer of an alpha and a beta subunit. Beta-1 associates with either alpha-1, alpha-2, alpha-3, alpha-4, alpha-5, alpha-6, alpha-7, alpha-8, alpha-9, alpha-10, alpha-11 or alpha-V. ITGA6:ITGB1 is found in a complex with CD9; interaction takes place in oocytes and is involved in sperm-egg fusion. Binds LGALS3BP and NMRK2, when associated with alpha-7, but not with alpha-5. Interacts with FLNB, FLNC and RANBP9. Interacts with KRT1 in the presence of RACK1 and SRC. Interacts with JAML; integrin alpha-4/beta-1 may regulate leukocyte to endothelial cells adhesion by controlling JAML homodimerization. Interacts with RAB21. Interacts (via the cytoplasmic region) with RAB25 (via the hypervariable C-terminal region). Interacts with MYO10. Interacts with ITGB1BP1 (via C-terminal region); the interaction is a prerequisite for focal adhesion disassembly. Interacts with TLN1; the interaction is prevented by competitive binding of ITGB1BP1. Interacts with ACAP1; required for ITGB1 recycling. Interacts with ASAP3. Interacts with FERMT2; the interaction is inhibited in presence of ITGB1BP1. Interacts with DAB2. Interacts with FGR and HCK. Interacts with EMP2; the interaction may be direct or indirect and ITGB1 has a heterodimer form. ITGA5:ITGB1 interacts with CCN3. ITGA4:ITGB1 is found in a ternary complex with CX3CR1 and CX3CL1. ITGA5:ITGB1 interacts with FBN1. ITGA5:ITGB1 interacts with IL1B. Interacts with MDK. ITGA4:ITGB1 interacts with MDK; this interaction mediates MDK-induced osteoblast cells migration through PXN phosphorylation. ITGA6:ITGB1 interacts with MDK; this interaction mediates MDK-induced neurite-outgrowth. ITGA5:ITGB1 interacts with ACE2. Interacts with TMEM182 and LAMB1. Interacts with tensin TNS3; TNS3 also interacts with PEAK1, thus acting as an adapter molecule to bridge the association of PEAK1 with ITGB1. Interacts with tensin TNS4; the interaction displaces tensin TNS3 from the ITGB1 cytoplasmic tail and promotes ITGB1 stability. Integrin ITGA9:ITGB1 interacts with SPP1/OPN (via N-terminus). Integrin ITGA9:ITGB1 interacts with TNC/TNFN3 (via the 3rd Fibronectin type-III domain). Integrins ITGA4:ITGB1 and ITGA9:ITGB1 interact with SVEP1 (via Sushi domain 21); thereby inhibit Ca(2+) intracellular signaling and as a result repress vasocontraction. ITGA4:ITGB1 and ITGA5:ITGB1 interacts with SELP. Interacts with CD248. ITGA5:ITGB1 interacts with IGFBP1. ITGA4:ITGB1 interacts with BCAM. Interacts with ADGRG6. Interacts with the C-terminal region of FLNC. Interacts with filamin FLNA isoform 3/VAR-1. In terms of assembly, interacts with ACE2. Interacts with alpha-7B in cardiomyocytes of adult heart and alpha-7A and alpha-7B in adult skeletal muscle. Interacts with filamin FLNA isoform 3/VAR-1.

It is found in the cell membrane. The protein localises to the cell projection. It localises to the invadopodium membrane. Its subcellular location is the ruffle membrane. The protein resides in the recycling endosome. It is found in the melanosome. The protein localises to the lamellipodium. It localises to the ruffle. Its subcellular location is the cell junction. The protein resides in the focal adhesion. It is found in the sarcolemma. Its function is as follows. Integrins alpha-1/beta-1, alpha-2/beta-1, alpha-10/beta-1 and alpha-11/beta-1 are receptors for collagen. Integrins alpha-1/beta-1 and alpha-2/beta-2 recognize the proline-hydroxylated sequence G-F-P-G-E-R in collagen. Integrins alpha-2/beta-1, alpha-3/beta-1, alpha-4/beta-1, alpha-5/beta-1, alpha-8/beta-1, alpha-10/beta-1, alpha-11/beta-1 and alpha-V/beta-1 are receptors for fibronectin. Alpha-4/beta-1 recognizes one or more domains within the alternatively spliced CS-1 and CS-5 regions of fibronectin. Integrin alpha-5/beta-1 is a receptor for fibrinogen. Integrin alpha-1/beta-1, alpha-2/beta-1, alpha-6/beta-1 and alpha-7/beta-1 are receptors for lamimin. Integrin alpha-6/beta-1 (ITGA6:ITGB1) is present in oocytes and is involved in sperm-egg fusion. Integrin alpha-4/beta-1 is a receptor for VCAM1 and recognizes the sequence Q-I-D-S in VCAM1. Integrin alpha-9/beta-1 is a receptor for VCAM1, cytotactin and osteopontin. It recognizes the sequence A-E-I-D-G-I-E-L in cytotactin. Integrin alpha-3/beta-1 is a receptor for epiligrin, thrombospondin and CSPG4. Integrin alpha-3/beta-1 provides a docking site for FAP (seprase) at invadopodia plasma membranes in a collagen-dependent manner and hence may participate in the adhesion, formation of invadopodia and matrix degradation processes, promoting cell invasion. Alpha-3/beta-1 may mediate with LGALS3 the stimulation by CSPG4 of endothelial cells migration. Integrin alpha-V/beta-1 is a receptor for vitronectin. Beta-1 integrins recognize the sequence R-G-D in a wide array of ligands. When associated with alpha-7/beta-1 integrin, regulates cell adhesion and laminin matrix deposition. Involved in promoting endothelial cell motility and angiogenesis. Involved in osteoblast compaction through the fibronectin fibrillogenesis cell-mediated matrix assembly process and the formation of mineralized bone nodules. May be involved in up-regulation of the activity of kinases such as PKC via binding to KRT1. Together with KRT1 and RACK1, serves as a platform for SRC activation or inactivation. Plays a mechanistic adhesive role during telophase, required for the successful completion of cytokinesis. ITGA4:ITGB1 binds to fractalkine (CX3CL1) and may act as its coreceptor in CX3CR1-dependent fractalkine signaling. ITGA4:ITGB1 and ITGA5:ITGB1 bind to PLA2G2A via a site (site 2) which is distinct from the classical ligand-binding site (site 1) and this induces integrin conformational changes and enhanced ligand binding to site 1. ITGA5:ITGB1 acts as a receptor for fibrillin-1 (FBN1) and mediates R-G-D-dependent cell adhesion to FBN1. ITGA5:ITGB1 acts as a receptor for fibronectin FN1 and mediates R-G-D-dependent cell adhesion to FN1. ITGA5:ITGB1 is a receptor for IL1B and binding is essential for IL1B signaling. ITGA5:ITGB3 is a receptor for soluble CD40LG and is required for CD40/CD40LG signaling. Plays an important role in myoblast differentiation and fusion during skeletal myogenesis. ITGA9:ITGB1 may play a crucial role in SVEP1/polydom-mediated myoblast cell adhesion. Integrins ITGA9:ITGB1 and ITGA4:ITGB1 repress PRKCA-mediated L-type voltage-gated channel Ca(2+) influx and ROCK-mediated calcium sensitivity in vascular smooth muscle cells via their interaction with SVEP1, thereby inhibit vasocontraction. In Bos taurus (Bovine), this protein is Integrin beta-1 (ITGB1).